The following is a 126-amino-acid chain: Histone H2B (126 aa).

Positions 1 to 12 (MPEPAKSAPAAK) are enriched in low complexity. The tract at residues 1–35 (MPEPAKSAPAAKKGSKKAVSKVQKKDGKKRRKSRK) is disordered. An N6-acetyllysine mark is found at Lys6 and Lys13. Phosphoserine is present on Ser15. Residues Lys16 and Lys21 each carry the N6-acetyllysine modification. Ser113 carries O-linked (GlcNAc) serine glycosylation. Lys121 is covalently cross-linked (Glycyl lysine isopeptide (Lys-Gly) (interchain with G-Cter in ubiquitin)).

The protein belongs to the histone H2B family. In terms of assembly, the nucleosome is a histone octamer containing two molecules each of H2A, H2B, H3 and H4 assembled in one H3-H4 heterotetramer and two H2A-H2B heterodimers. The octamer wraps approximately 147 bp of DNA. Post-translationally, monoubiquitination of Lys-121 by BRE1 gives a specific tag for epigenetic transcriptional activation and is also prerequisite for histone H3 'Lys-4' and 'Lys-79' methylation. Phosphorylated on Ser-15 during apoptosis; which facilitates apoptotic chromatin condensation. In terms of processing, glcNAcylation at Ser-113 promotes monoubiquitination of Lys-121. It fluctuates in response to extracellular glucose, and associates with transcribed genes. In terms of tissue distribution, expressed by the skin granular glands.

It is found in the nucleus. The protein resides in the secreted. The protein localises to the chromosome. In terms of biological role, core component of nucleosome. Nucleosomes wrap and compact DNA into chromatin, limiting DNA accessibility to the cellular machineries which require DNA as a template. Histones thereby play a central role in transcription regulation, DNA repair, DNA replication and chromosomal stability. DNA accessibility is regulated via a complex set of post-translational modifications of histones, also called histone code, and nucleosome remodeling. Functionally, has antibacterial activity against the Gram-negative bacteria E.coli and the Gram-positive bacteria S.aureus. This chain is Histone H2B, found in Zhangixalus schlegelii (Japanese gliding frog).